The chain runs to 826 residues: Ubiquitin carboxyl-terminal hydrolase 16 (826 aa).

The UBP-type zinc finger occupies 22 to 142 (PVCRHIRKGL…QVVDYVRKQA (121 aa)). Residues Cys-24, His-26, Cys-48, Cys-51, Cys-74, Cys-77, Cys-82, His-90, His-94, His-103, Cys-116, and Cys-119 each coordinate Zn(2+). A Glycyl lysine isopeptide (Lys-Gly) (interchain with G-Cter in SUMO2) cross-link involves residue Lys-140. The tract at residues 144–189 (NTTPESAEDNGNIELENKKLEKESKNEQEREKKENMARENPSMNST) is disordered. Basic and acidic residues predominate over residues 158-180 (LENKKLEKESKNEQEREKKENMA). Residue Ser-188 is modified to Phosphoserine. Residues 195 to 825 (KGLSNLGNTC…QAYLLFYERI (631 aa)) form the USP domain. Catalysis depends on Cys-204, which acts as the Nucleophile. Over residues 393–407 (SGKKSINDKNLKKTM) the composition is skewed to basic and acidic residues. The disordered stretch occupies residues 393–458 (SGKKSINDKN…QAKNQRRQQK (66 aa)). A compositionally biased stretch (acidic residues) spans 408–419 (EDEDKDSEEEKD). Phosphoserine is present on Ser-414. Positions 420 to 429 (NDSYLKERND) are enriched in basic and acidic residues. The span at 437–457 (HLQKKAKKQAKKQAKNQRRQQ) shows a compositional bias: basic residues. 2 positions are modified to phosphoserine: Ser-530 and Ser-551. The active-site Proton acceptor is His-760.

This sequence belongs to the peptidase C19 family. USP16 subfamily. Homotetramer. Associates with late pre-40S ribosomes. Interacts with CEP78; promoting deubiquitination of tektins. In terms of processing, phosphorylated at the onset of mitosis and dephosphorylated during the metaphase/anaphase transition. Phosphorylation by AURKB enhances the deubiquitinase activity.

It localises to the nucleus. The catalysed reaction is Thiol-dependent hydrolysis of ester, thioester, amide, peptide and isopeptide bonds formed by the C-terminal Gly of ubiquitin (a 76-residue protein attached to proteins as an intracellular targeting signal).. Specifically deubiquitinates 'Lys-120' of histone H2A (H2AK119Ub), a specific tag for epigenetic transcriptional repression, thereby acting as a coactivator. Deubiquitination of histone H2A is a prerequisite for subsequent phosphorylation at 'Ser-11' of histone H3 (H3S10ph), and is required for chromosome segregation when cells enter into mitosis. In resting B- and T-lymphocytes, phosphorylation by AURKB leads to enhance its activity, thereby maintaining transcription in resting lymphocytes. Regulates Hox gene expression via histone H2A deubiquitination. Prefers nucleosomal substrates. Does not deubiquitinate histone H2B. Also deubiquitinates non-histone proteins, such as ribosomal protein RPS27A: deubiquitination of monoubiquitinated RPS27A promotes maturation of the 40S ribosomal subunit. Also mediates deubiquitination of tektin proteins (TEKT1, TEKT2, TEK3, TEKT4 and TEKT5), promoting their stability. The protein is Ubiquitin carboxyl-terminal hydrolase 16 of Bos taurus (Bovine).